The primary structure comprises 188 residues: Protein GrpE (188 aa).

A disordered region spans residues Met-1–Gly-22.

Belongs to the GrpE family. As to quaternary structure, homodimer.

Its subcellular location is the cytoplasm. Its function is as follows. Participates actively in the response to hyperosmotic and heat shock by preventing the aggregation of stress-denatured proteins, in association with DnaK and GrpE. It is the nucleotide exchange factor for DnaK and may function as a thermosensor. Unfolded proteins bind initially to DnaJ; upon interaction with the DnaJ-bound protein, DnaK hydrolyzes its bound ATP, resulting in the formation of a stable complex. GrpE releases ADP from DnaK; ATP binding to DnaK triggers the release of the substrate protein, thus completing the reaction cycle. Several rounds of ATP-dependent interactions between DnaJ, DnaK and GrpE are required for fully efficient folding. The protein is Protein GrpE of Pseudomonas fluorescens (strain ATCC BAA-477 / NRRL B-23932 / Pf-5).